The sequence spans 197 residues: Stanniocalcin-2 (197 aa).

Residues Thr-1–Arg-20 form a disordered region.

It belongs to the stanniocalcin family. In terms of assembly, homodimer; disulfide-linked.

The protein resides in the secreted. Functionally, has an anti-hypocalcemic action on calcium and phosphate homeostasis. The sequence is that of Stanniocalcin-2 (STC2) from Cavia porcellus (Guinea pig).